A 139-amino-acid polypeptide reads, in one-letter code: uncharacterized protein (139 aa).

This is an uncharacterized protein from Dictyostelium discoideum (Social amoeba).